Consider the following 163-residue polypeptide: Putative phosphinothricin acetyltransferase YwnH (163 aa).

One can recognise an N-acetyltransferase domain in the interval 1 to 158 (MTLRLAEHRD…DGKRYDLKIL (158 aa)). Residues 85-87 (IYI), 94-98 (KGVGS), and 124-126 (NKP) contribute to the acetyl-CoA site.

It belongs to the acetyltransferase family. PAT/BAR subfamily.

It carries out the reaction phosphinothricin + acetyl-CoA = N-acetylphosphinothricin + CoA + H(+). This enzyme is an effector of phosphinothricin tripeptide (PTT or bialaphos) resistance. Inactivates PTT by transfer of an acetyl group. This chain is Putative phosphinothricin acetyltransferase YwnH (ywnH), found in Bacillus subtilis (strain 168).